The primary structure comprises 35 residues: Photosystem II reaction center protein Psb30 (35 aa).

The chain crosses the membrane as a helical span at residues 7 to 27 (LIANFAALALITLAGPAVIFI).

It belongs to the Psb30/Ycf12 family. In terms of assembly, PSII is composed of 1 copy each of membrane proteins PsbA, PsbB, PsbC, PsbD, PsbE, PsbF, PsbH, PsbI, PsbJ, PsbK, PsbL, PsbM, PsbT, PsbX, PsbY, PsbZ, Psb30/Ycf12, peripheral proteins of the oxygen-evolving complex and a large number of cofactors. It forms dimeric complexes.

It is found in the plastid. Its subcellular location is the organellar chromatophore thylakoid membrane. Functionally, a core subunit of photosystem II (PSII), probably helps stabilize the reaction center. The polypeptide is Photosystem II reaction center protein Psb30 (Paulinella chromatophora).